Consider the following 175-residue polypeptide: Clathrin-associated protein AP-3 complex component APS3 (175 aa).

This sequence belongs to the adaptor complexes small subunit family. Adaptor protein complex 3 (AP-3) is a heterotetramer composed of 2 large adaptins, a medium adaptin and a small adaptin.

It localises to the golgi apparatus. The protein resides in the cytoplasmic vesicle membrane. Part of the AP-3 complex, an adapter-related complex which is not clathrin-associated. The complex is associated with the Golgi region as well as more peripheral structures. It facilitates the budding of vesicles from the Golgi membrane. Involved in vacuolar trafficking and contributes to hyphal growth and pathogenesis. This is Clathrin-associated protein AP-3 complex component APS3 (APS3) from Candida albicans (strain SC5314 / ATCC MYA-2876) (Yeast).